The chain runs to 329 residues: GTP 3',8-cyclase (329 aa).

Residues 8–234 (AFARKFYYLR…QLRQRSDGPA (227 aa)) form the Radical SAM core domain. Position 17 (arginine 17) interacts with GTP. Positions 24 and 28 each coordinate [4Fe-4S] cluster. Residue tyrosine 30 participates in S-adenosyl-L-methionine binding. Cysteine 31 serves as a coordination point for [4Fe-4S] cluster. GTP is bound at residue arginine 68. Glycine 72 contacts S-adenosyl-L-methionine. Threonine 99 lines the GTP pocket. Residue serine 123 participates in S-adenosyl-L-methionine binding. Position 160 (lysine 160) interacts with GTP. Methionine 194 contacts S-adenosyl-L-methionine. Residues cysteine 257 and cysteine 260 each coordinate [4Fe-4S] cluster. Position 262 to 264 (262 to 264 (RLR)) interacts with GTP. Residue cysteine 274 participates in [4Fe-4S] cluster binding.

Belongs to the radical SAM superfamily. MoaA family. In terms of assembly, monomer and homodimer. Requires [4Fe-4S] cluster as cofactor.

The enzyme catalyses GTP + AH2 + S-adenosyl-L-methionine = (8S)-3',8-cyclo-7,8-dihydroguanosine 5'-triphosphate + 5'-deoxyadenosine + L-methionine + A + H(+). Its pathway is cofactor biosynthesis; molybdopterin biosynthesis. Functionally, catalyzes the cyclization of GTP to (8S)-3',8-cyclo-7,8-dihydroguanosine 5'-triphosphate. The sequence is that of GTP 3',8-cyclase from Shigella boydii serotype 18 (strain CDC 3083-94 / BS512).